The primary structure comprises 163 residues: Choriogonadotropin subunit beta (163 aa).

An N-terminal signal peptide occupies residues 1-20 (MEMLQGLLLCLLLSTGGAWA). Intrachain disulfides connect C29–C76, C43–C91, C46–C129, C54–C107, C58–C109, and C112–C119. Residue N50 is glycosylated (N-linked (GlcNAc...) asparagine). Residue N124 is glycosylated (N-linked (GlcNAc...) asparagine). Over residues 135–151 (QDSSSNVPPSNLTSPSQ) the composition is skewed to polar residues. A disordered region spans residues 135–163 (QDSSSNVPPSNLTSPSQLLEPAVTPLVPQ). S139 carries an O-linked (GalNAc...) serine glycan. N145 is a glycosylation site (N-linked (GlcNAc...) asparagine). S150 carries an O-linked (GalNAc...) serine glycan.

It belongs to the glycoprotein hormones subunit beta family. As to quaternary structure, heterodimer of a common alpha chain and a unique beta chain which confers biological specificity to thyrotropin, lutropin, follitropin and gonadotropin.

Its subcellular location is the secreted. In terms of biological role, stimulates the ovaries to synthesize the steroids that are essential for the maintenance of pregnancy. The chain is Choriogonadotropin subunit beta (CGB) from Saimiri boliviensis boliviensis (Bolivian squirrel monkey).